The primary structure comprises 101 residues: Vacuolar ATPase assembly integral membrane protein VMA21 (101 aa).

Residues 1–25 (MERLDKAALNALQPSDFRNESSLAS) are Cytoplasmic-facing. The chain crosses the membrane as a helical span at residues 26–46 (TLKTLLFFTALMITVPIGLYF). Topologically, residues 47–65 (TTKSYVFEGAFGMSNRDSY) are lumenal. The chain crosses the membrane as a helical span at residues 66-86 (FYAAIVAVVAVHVVLALFVYV). Over 87–101 (AWNEGSRQWREGKQD) the chain is Cytoplasmic.

Belongs to the VMA21 family. As to quaternary structure, associates with the V0 complex of the vacuolar ATPase (V-ATPase). Interacts with ATP6AP2.

The protein resides in the endoplasmic reticulum membrane. The protein localises to the endoplasmic reticulum-Golgi intermediate compartment membrane. It localises to the cytoplasmic vesicle. It is found in the COPII-coated vesicle membrane. Functionally, required for the assembly of the V0 complex of the vacuolar ATPase (V-ATPase) in the endoplasmic reticulum. The polypeptide is Vacuolar ATPase assembly integral membrane protein VMA21 (Bos taurus (Bovine)).